Consider the following 224-residue polypeptide: 7-cyano-7-deazaguanine synthase (224 aa).

8–18 contacts ATP; that stretch reads LSGGMDSAAVI. 4 residues coordinate Zn(2+): Cys186, Cys196, Cys199, and Cys202.

It belongs to the QueC family. Zn(2+) is required as a cofactor.

It catalyses the reaction 7-carboxy-7-deazaguanine + NH4(+) + ATP = 7-cyano-7-deazaguanine + ADP + phosphate + H2O + H(+). The protein operates within purine metabolism; 7-cyano-7-deazaguanine biosynthesis. Functionally, catalyzes the ATP-dependent conversion of 7-carboxy-7-deazaguanine (CDG) to 7-cyano-7-deazaguanine (preQ(0)). The polypeptide is 7-cyano-7-deazaguanine synthase (Xanthomonas axonopodis pv. citri (strain 306)).